A 100-amino-acid chain; its full sequence is Urease subunit gamma (100 aa).

Belongs to the urease gamma subunit family. In terms of assembly, heterotrimer of UreA (gamma), UreB (beta) and UreC (alpha) subunits. Three heterotrimers associate to form the active enzyme.

Its subcellular location is the cytoplasm. It carries out the reaction urea + 2 H2O + H(+) = hydrogencarbonate + 2 NH4(+). It functions in the pathway nitrogen metabolism; urea degradation; CO(2) and NH(3) from urea (urease route): step 1/1. This is Urease subunit gamma from Burkholderia ambifaria (strain MC40-6).